The following is a 214-amino-acid chain: GTP-binding nuclear protein GSP1/Ran (214 aa).

Residues 4-168 (EVPTFKLVLV…LWLARKLAGN (165 aa)) form the Small GTPase Ran-type domain. 15-22 (DGGTGKTT) serves as a coordination point for GTP. The interval 34–42 (KKYIATIGV) is switch-I. Residues Gly-65, 119–122 (NKVD), and 147–149 (SAK) each bind GTP. The tract at residues 65–81 (GQEKFGGLRDGYYINAQ) is switch-II.

The protein belongs to the small GTPase superfamily. Ran family. In terms of assembly, found in a nuclear export complex with RanGTP, exportin and pre-miRNA.

It is found in the nucleus. GTP-binding protein involved in nucleocytoplasmic transport. Required for the import of protein into the nucleus and also for RNA export. Involved in chromatin condensation and control of cell cycle. The polypeptide is GTP-binding nuclear protein GSP1/Ran (GSP1) (Eremothecium gossypii (strain ATCC 10895 / CBS 109.51 / FGSC 9923 / NRRL Y-1056) (Yeast)).